Here is a 512-residue protein sequence, read N- to C-terminus: Ammonium transporter 2 (512 aa).

At 1–47 (MSSVNSIPTATSTVYISVLPATATPSGGSGGNVLHEDLNKFYDYGNT) the chain is on the extracellular side. The helical transmembrane segment at 48-68 (SWILACTPLCLIMVPGVAFFY) threads the bilayer. Over 69-77 (SGLARRKNT) the chain is Cytoplasmic. Residues 78-98 (LALIMLSMLGLCVSFFQWYFW) form a helical membrane-spanning segment. The Extracellular portion of the chain corresponds to 99–137 (GYSLAFSQTGTSGYIGNLRHFAFIRTLADYSPGSNNIPE). A helical transmembrane segment spans residues 138–158 (LVFANFQGMFAAITVALFTGA). The Cytoplasmic portion of the chain corresponds to 159 to 167 (AAERGRIGP). Residues 168 to 188 (MLIITFVWLTVVYCPIACWIW) form a helical membrane-spanning segment. The Extracellular portion of the chain corresponds to 189–201 (NPNGWAFKFGVYD). A helical transmembrane segment spans residues 202-222 (FAGGGPVEVGSGFAALAYTVC). Topologically, residues 223 to 238 (LGRRSKFVEEQFRPHS) are cytoplasmic. A helical membrane pass occupies residues 239-259 (VLNVVLGTSLLWFGWLGFNGG). Topologically, residues 260–267 (SAYGSNLR) are extracellular. Residues 268-288 (AAMAITNTNLAGAVAGLVWVI) form a helical membrane-spanning segment. Over 289 to 300 (YDYIFRTRKWST) the chain is Cytoplasmic. Residues 301–321 (IGFCSGVVAGLVAATPCAGFV) form a helical membrane-spanning segment. Residue Ser322 is a topological domain, extracellular. Residues 323 to 343 (PHASLAIGAITGLCCNWAIKL) traverse the membrane as a helical segment. At 344 to 354 (KSHMRIDDAMD) the chain is on the cytoplasmic side. The helical transmembrane segment at 355–375 (IFAIHGVAGFVGTFLNGLFAV) threads the bilayer. Topologically, residues 376–406 (DYIAAMDGIYVGENKIRGGWFDHHWRQLGLQ) are extracellular. A helical membrane pass occupies residues 407–427 (MAYICAVGAYDFVVTFIILFI). Residues 428–512 (TDKIPYLQLR…TNPLELGLTI (85 aa)) lie on the Cytoplasmic side of the membrane.

The protein belongs to the ammonia transporter channel (TC 1.A.11.2) family.

It localises to the membrane. Functionally, transporter for ammonium to use as a nitrogen source. This Schizosaccharomyces pombe (strain 972 / ATCC 24843) (Fission yeast) protein is Ammonium transporter 2 (amt2).